Consider the following 213-residue polypeptide: ATP phosphoribosyltransferase (213 aa).

It belongs to the ATP phosphoribosyltransferase family. Short subfamily. As to quaternary structure, heteromultimer composed of HisG and HisZ subunits.

It is found in the cytoplasm. It carries out the reaction 1-(5-phospho-beta-D-ribosyl)-ATP + diphosphate = 5-phospho-alpha-D-ribose 1-diphosphate + ATP. Its pathway is amino-acid biosynthesis; L-histidine biosynthesis; L-histidine from 5-phospho-alpha-D-ribose 1-diphosphate: step 1/9. Its function is as follows. Catalyzes the condensation of ATP and 5-phosphoribose 1-diphosphate to form N'-(5'-phosphoribosyl)-ATP (PR-ATP). Has a crucial role in the pathway because the rate of histidine biosynthesis seems to be controlled primarily by regulation of HisG enzymatic activity. The chain is ATP phosphoribosyltransferase from Listeria welshimeri serovar 6b (strain ATCC 35897 / DSM 20650 / CCUG 15529 / CIP 8149 / NCTC 11857 / SLCC 5334 / V8).